A 199-amino-acid chain; its full sequence is Imidazoleglycerol-phosphate dehydratase (199 aa).

This sequence belongs to the imidazoleglycerol-phosphate dehydratase family.

The protein localises to the cytoplasm. It catalyses the reaction D-erythro-1-(imidazol-4-yl)glycerol 3-phosphate = 3-(imidazol-4-yl)-2-oxopropyl phosphate + H2O. It functions in the pathway amino-acid biosynthesis; L-histidine biosynthesis; L-histidine from 5-phospho-alpha-D-ribose 1-diphosphate: step 6/9. In Acidithiobacillus ferrooxidans (strain ATCC 53993 / BNL-5-31) (Leptospirillum ferrooxidans (ATCC 53993)), this protein is Imidazoleglycerol-phosphate dehydratase.